We begin with the raw amino-acid sequence, 486 residues long: Cysteine--tRNA ligase (486 aa).

A Zn(2+)-binding site is contributed by Cys29. The short motif at 31–41 (VTVYDYCHLGH) is the 'HIGH' region element. Cys214, His239, and Glu243 together coordinate Zn(2+). The 'KMSKS' region signature appears at 271-275 (KMSKS). ATP is bound at residue Lys274.

This sequence belongs to the class-I aminoacyl-tRNA synthetase family. In terms of assembly, monomer. Zn(2+) serves as cofactor.

The protein resides in the cytoplasm. It carries out the reaction tRNA(Cys) + L-cysteine + ATP = L-cysteinyl-tRNA(Cys) + AMP + diphosphate. The sequence is that of Cysteine--tRNA ligase from Nostoc sp. (strain PCC 7120 / SAG 25.82 / UTEX 2576).